The sequence spans 99 residues: Large ribosomal subunit protein uL23 (99 aa).

The protein belongs to the universal ribosomal protein uL23 family. In terms of assembly, part of the 50S ribosomal subunit. Contacts protein L29, and trigger factor when it is bound to the ribosome.

Its function is as follows. One of the early assembly proteins it binds 23S rRNA. One of the proteins that surrounds the polypeptide exit tunnel on the outside of the ribosome. Forms the main docking site for trigger factor binding to the ribosome. This chain is Large ribosomal subunit protein uL23, found in Stutzerimonas stutzeri (strain A1501) (Pseudomonas stutzeri).